The primary structure comprises 176 residues: MGSSKDSASVTNISVEEHFSVSQSSPGGQFVGPTEEISTAAEALIGRSTTLTEALKAASMNVGHKPVETTDVAAIKEVETRAIGGDIESEGGVTAVASKAVARNQKIGKDNEKTNLGDVIAEIDVKVTRDREVTSEDAEAVIRAELNHSPFNNIIPGGVAESVAAAYKLNHDPSSL.

2 SMP domains span residues 49–106 (TTLT…RNQK) and 115–171 (NLGD…KLNH).

It belongs to the LEA type SMP family.

The protein resides in the cytoplasm. It is found in the nucleus. Functionally, LEA proteins are late embryonic proteins abundant in higher plant seed embryos. The function of those proteins is not known. This chain is Late embryogenesis abundant protein 49, found in Arabidopsis thaliana (Mouse-ear cress).